The sequence spans 339 residues: Pre-mRNA-splicing factor syf2 (339 aa).

The disordered stretch occupies residues 1-136 (MPPEKKRKTE…LQSDPSQLTA (136 aa)). Residues 7-16 (RKTEPEDKAE) show a composition bias toward basic and acidic residues. Positions 17–37 (VTQQENDVAESTTEPNNQTVT) are enriched in polar residues. Low complexity predominate over residues 45–93 (VTEAALATTSSSSPPVLSASETAQPDTAATSQSSSTPPTSTSAAESAAA). Basic and acidic residues predominate over residues 94–103 (KARERAERFR). Polar residues predominate over residues 126-135 (RLQSDPSQLT).

The protein belongs to the SYF2 family. In terms of assembly, associated with the spliceosome.

The protein localises to the nucleus. Involved in pre-mRNA splicing. This chain is Pre-mRNA-splicing factor syf2 (msp-4), found in Neurospora crassa (strain ATCC 24698 / 74-OR23-1A / CBS 708.71 / DSM 1257 / FGSC 987).